The chain runs to 606 residues: Major centromere autoantigen B (606 aa).

The residue at position 2 (G2) is a N,N,N-trimethylglycine. Residues 2–52 (GPKRRQLTFREKSRIIQEVEENPDLRKGEIARRFNIPPSTLSTILKNKRAI) enclose the HTH psq-type domain. 2 DNA-binding regions (H-T-H motif) span residues 28-48 (KGEI…ILKN) and 97-129 (GIIL…FRRR). One can recognise an HTH CENPB-type domain in the interval 65–136 (CRKTNKLSPY…RRRHGVVACS (72 aa)). A disordered region spans residues 138 to 184 (VTRSRARTSTPRAPAAPAGPAAVPSEGSGGSTPGWRTREEQPPSVAE). A compositionally biased stretch (low complexity) spans 144-163 (RTSTPRAPAAPAGPAAVPSE). Position 165 is a phosphoserine (S165). K246 participates in a covalent cross-link: Glycyl lysine isopeptide (Lys-Gly) (interchain with G-Cter in SUMO2). Disordered regions lie at residues 392–480 (GLNA…LEAE) and 504–549 (CPTL…VPVP). A phosphothreonine mark is found at T396 and T398. Acidic residues-rich tracts occupy residues 405 to 480 (GEEE…LEAE) and 512 to 545 (GGED…DGDE). A homodimerization region spans residues 543–606 (GDEVPVPSFG…AGVRGLGHQS (64 aa)).

Antiparallel homodimer. Interacts with CENPT. Identified in a centromere complex containing histones H2A, H2B and H4, and at least CENPA, CENPB, CENPC, CENPT, CENPN, HJURP, SUPT16H, SSRP1 and RSF1. In terms of processing, poly-ADP-ribosylated by PARP1. Post-translationally, N-terminally methylated by METTL11A/NTM1. Alpha-N-methylation is stimulated in response to extracellular stimuli, including increased cell density and heat shock, and seems to facilitate binding to CENP-B boxes. Chromatin-bound CENP-B is primarily trimethylated.

The protein resides in the nucleus. Its subcellular location is the chromosome. It localises to the centromere. In terms of biological role, interacts with centromeric heterochromatin in chromosomes and binds to a specific 17 bp subset of alphoid satellite DNA, called the CENP-B box. May organize arrays of centromere satellite DNA into a higher-order structure which then directs centromere formation and kinetochore assembly in mammalian chromosomes. This Cricetulus griseus (Chinese hamster) protein is Major centromere autoantigen B (CENPB).